Consider the following 122-residue polypeptide: Large ribosomal subunit protein uL14c (122 aa).

It belongs to the universal ribosomal protein uL14 family. Part of the 50S ribosomal subunit.

Its subcellular location is the plastid. It localises to the chloroplast. Its function is as follows. Binds to 23S rRNA. The protein is Large ribosomal subunit protein uL14c of Phalaenopsis aphrodite subsp. formosana (Moth orchid).